Reading from the N-terminus, the 203-residue chain is Proline-rich protein 1 (203 aa).

An N-terminal signal peptide occupies residues 1–20 (MMKLGLYLTLLFLSVWTVSG).

As to expression, component of the acid-insoluble and acid-soluble organic matrix of calcified layers of the shell (at protein level).

Its subcellular location is the secreted. This Lottia gigantea (Giant owl limpet) protein is Proline-rich protein 1.